Reading from the N-terminus, the 355-residue chain is Elongation factor Ts (355 aa).

An involved in Mg(2+) ion dislocation from EF-Tu region spans residues 82 to 85 (TDFV).

The protein belongs to the EF-Ts family.

The protein resides in the cytoplasm. In terms of biological role, associates with the EF-Tu.GDP complex and induces the exchange of GDP to GTP. It remains bound to the aminoacyl-tRNA.EF-Tu.GTP complex up to the GTP hydrolysis stage on the ribosome. The sequence is that of Elongation factor Ts from Wolinella succinogenes (strain ATCC 29543 / DSM 1740 / CCUG 13145 / JCM 31913 / LMG 7466 / NCTC 11488 / FDC 602W) (Vibrio succinogenes).